Reading from the N-terminus, the 334-residue chain is Holliday junction branch migration complex subunit RuvB (334 aa).

Residues 1–179 are large ATPase domain (RuvB-L); that stretch reads MTHKISVLHQ…FAFTGRVDYY (179 aa). Residues Leu-18, Arg-19, Gly-60, Lys-63, Thr-64, Ser-65, 126–128, Arg-169, Tyr-179, and Arg-216 contribute to the ATP site; that span reads EDF. Thr-64 contributes to the Mg(2+) binding site. Positions 180 to 250 are small ATPAse domain (RuvB-S); it reads TDEDLVSILS…VAEKALAMLL (71 aa). The tract at residues 253-334 is head domain (RuvB-H); the sequence is NLGLNEIDIK…RNPKDRWGEE (82 aa). DNA is bound by residues Arg-308 and Arg-313.

The protein belongs to the RuvB family. In terms of assembly, homohexamer. Forms an RuvA(8)-RuvB(12)-Holliday junction (HJ) complex. HJ DNA is sandwiched between 2 RuvA tetramers; dsDNA enters through RuvA and exits via RuvB. An RuvB hexamer assembles on each DNA strand where it exits the tetramer. Each RuvB hexamer is contacted by two RuvA subunits (via domain III) on 2 adjacent RuvB subunits; this complex drives branch migration. In the full resolvosome a probable DNA-RuvA(4)-RuvB(12)-RuvC(2) complex forms which resolves the HJ.

It is found in the cytoplasm. It carries out the reaction ATP + H2O = ADP + phosphate + H(+). Its function is as follows. The RuvA-RuvB-RuvC complex processes Holliday junction (HJ) DNA during genetic recombination and DNA repair, while the RuvA-RuvB complex plays an important role in the rescue of blocked DNA replication forks via replication fork reversal (RFR). RuvA specifically binds to HJ cruciform DNA, conferring on it an open structure. The RuvB hexamer acts as an ATP-dependent pump, pulling dsDNA into and through the RuvAB complex. RuvB forms 2 homohexamers on either side of HJ DNA bound by 1 or 2 RuvA tetramers; 4 subunits per hexamer contact DNA at a time. Coordinated motions by a converter formed by DNA-disengaged RuvB subunits stimulates ATP hydrolysis and nucleotide exchange. Immobilization of the converter enables RuvB to convert the ATP-contained energy into a lever motion, pulling 2 nucleotides of DNA out of the RuvA tetramer per ATP hydrolyzed, thus driving DNA branch migration. The RuvB motors rotate together with the DNA substrate, which together with the progressing nucleotide cycle form the mechanistic basis for DNA recombination by continuous HJ branch migration. Branch migration allows RuvC to scan DNA until it finds its consensus sequence, where it cleaves and resolves cruciform DNA. This Chlamydia trachomatis serovar L2 (strain ATCC VR-902B / DSM 19102 / 434/Bu) protein is Holliday junction branch migration complex subunit RuvB.